Reading from the N-terminus, the 449-residue chain is Xylose isomerase (449 aa).

Active-site residues include His103 and Asp106. Glu234, Glu270, His273, Asp298, Asp309, Asp311, and Asp342 together coordinate Mg(2+).

Belongs to the xylose isomerase family. In terms of assembly, homotetramer. Requires Mg(2+) as cofactor.

Its subcellular location is the cytoplasm. The enzyme catalyses alpha-D-xylose = alpha-D-xylulofuranose. Involved in D-xylose catabolism. This is Xylose isomerase (xylA) from Lactiplantibacillus pentosus (Lactobacillus pentosus).